Consider the following 63-residue polypeptide: Large ribosomal subunit protein bL28 (63 aa).

Belongs to the bacterial ribosomal protein bL28 family.

The sequence is that of Large ribosomal subunit protein bL28 from Desulforudis audaxviator (strain MP104C).